The chain runs to 1653 residues: Clathrin heavy chain (1653 aa).

A globular terminal domain region spans residues 1-483; that stretch reads MSDLPIEFTE…FDTTLALACY (483 aa). WD40-like repeat stretches follow at residues 23 to 66, 67 to 107, 108 to 152, 153 to 198, 199 to 263, 264 to 307, and 308 to 336; these read FLDF…KNMG, GDSA…LDEP, VIFW…ANLN, NTQI…QAID, GHVA…PDAT, NDFP…ITAE, and SVFTAAPYNHENGIACINKKGQVLAVEIS. The tract at residues 453-469 is binding site for the uncoating ATPase, involved in lattice disassembly; sequence EKWLKEDKLECSEELGD. The tract at residues 484–527 is flexible linker; it reads LRAGAHAKVISCLAELQQFEKIIPYCQKVGYQPNFLVLISSLIR. The tract at residues 528 to 1653 is heavy chain arm; the sequence is SSPDRASEFA…SAMNVQPTGF (1126 aa). 7 CHCR repeats span residues 543–689, 692–834, 839–978, 985–1130, 1134–1275, 1280–1426, and 1429–1572; these read NPET…QTVV, ATKF…DEAF, LQSV…QLID, IPEL…IPDA, YIKA…FKLA, LNLI…SLLV, and LTSL…REGF. A Glycyl lysine isopeptide (Lys-Gly) (interchain with G-Cter in ubiquitin) cross-link involves residue K1107. An involved in binding clathrin light chain region spans residues 1219-1528; that stretch reads AARLCYSAVS…LLYRRNKKWA (310 aa).

This sequence belongs to the clathrin heavy chain family. As to quaternary structure, clathrin triskelions, composed of 3 heavy chains and 3 light chains, are the basic subunits of the clathrin coat. Interacts with the auxilin-like clathrin uncoating factor SWA2. Interacts with INP53.

Its subcellular location is the cytoplasmic vesicle membrane. The protein localises to the membrane. The protein resides in the coated pit. Its function is as follows. Clathrin is the major protein of the polyhedral coat of coated pits and vesicles. In yeast, it is involved in the retention of proteins in an intracellular membrane compartment, presumably the trans-Golgi. This Saccharomyces cerevisiae (strain ATCC 204508 / S288c) (Baker's yeast) protein is Clathrin heavy chain (CHC1).